Reading from the N-terminus, the 146-residue chain is Large ribosomal subunit protein uL15 (146 aa).

A compositionally biased stretch (basic and acidic residues) spans 1-13 (MKLHELKPAEGSR). Residues 1–52 (MKLHELKPAEGSRKVRNRVGRGIGSGNGKTAGKGHKGQNARSGGGVRLGFEG) are disordered. 2 stretches are compositionally biased toward gly residues: residues 21-31 (RGIGSGNGKTA) and 42-52 (SGGGVRLGFEG).

Belongs to the universal ribosomal protein uL15 family. Part of the 50S ribosomal subunit.

Binds to the 23S rRNA. The sequence is that of Large ribosomal subunit protein uL15 from Bacillus cereus (strain B4264).